The following is a 507-amino-acid chain: Histidine ammonia-lyase (507 aa).

Residues 140 to 142 (ASG) constitute a cross-link (5-imidazolinone (Ala-Gly)). Ser-141 carries the post-translational modification 2,3-didehydroalanine (Ser).

The protein belongs to the PAL/histidase family. Post-translationally, contains an active site 4-methylidene-imidazol-5-one (MIO), which is formed autocatalytically by cyclization and dehydration of residues Ala-Ser-Gly.

Its subcellular location is the cytoplasm. The catalysed reaction is L-histidine = trans-urocanate + NH4(+). Its pathway is amino-acid degradation; L-histidine degradation into L-glutamate; N-formimidoyl-L-glutamate from L-histidine: step 1/3. This chain is Histidine ammonia-lyase, found in Yersinia enterocolitica serotype O:8 / biotype 1B (strain NCTC 13174 / 8081).